Here is a 625-residue protein sequence, read N- to C-terminus: DNA-directed RNA polymerase subunit gamma (625 aa).

The Zn(2+) site is built by Cys71, Cys73, Cys86, and Cys89. The Mg(2+) site is built by Asp467, Asp469, and Asp471.

It belongs to the RNA polymerase beta' chain family. RpoC1 subfamily. As to quaternary structure, in cyanobacteria the RNAP catalytic core is composed of 2 alpha, 1 beta, 1 beta', 1 gamma and 1 omega subunit. When a sigma factor is associated with the core the holoenzyme is formed, which can initiate transcription. Requires Mg(2+) as cofactor. Zn(2+) serves as cofactor.

It carries out the reaction RNA(n) + a ribonucleoside 5'-triphosphate = RNA(n+1) + diphosphate. In terms of biological role, DNA-dependent RNA polymerase catalyzes the transcription of DNA into RNA using the four ribonucleoside triphosphates as substrates. This chain is DNA-directed RNA polymerase subunit gamma, found in Gloeothece citriformis (strain PCC 7424) (Cyanothece sp. (strain PCC 7424)).